We begin with the raw amino-acid sequence, 643 residues long: 1-deoxy-D-xylulose-5-phosphate synthase (643 aa).

Thiamine diphosphate-binding positions include His-78 and 119-121; that span reads AHS. Asp-150 lines the Mg(2+) pocket. Thiamine diphosphate contacts are provided by residues 151 to 152, Asn-179, Tyr-288, and Glu-370; that span reads GA. Asn-179 provides a ligand contact to Mg(2+).

Belongs to the transketolase family. DXPS subfamily. As to quaternary structure, homodimer. The cofactor is Mg(2+). Thiamine diphosphate serves as cofactor.

The enzyme catalyses D-glyceraldehyde 3-phosphate + pyruvate + H(+) = 1-deoxy-D-xylulose 5-phosphate + CO2. The protein operates within metabolic intermediate biosynthesis; 1-deoxy-D-xylulose 5-phosphate biosynthesis; 1-deoxy-D-xylulose 5-phosphate from D-glyceraldehyde 3-phosphate and pyruvate: step 1/1. Catalyzes the acyloin condensation reaction between C atoms 2 and 3 of pyruvate and glyceraldehyde 3-phosphate to yield 1-deoxy-D-xylulose-5-phosphate (DXP). This chain is 1-deoxy-D-xylulose-5-phosphate synthase, found in Xanthobacter autotrophicus (strain ATCC BAA-1158 / Py2).